The primary structure comprises 352 residues: tRNA-specific 2-thiouridylase MnmA (352 aa).

Residues 7 to 14 (GLSGGVDS) and leucine 33 each bind ATP. Catalysis depends on cysteine 94, which acts as the Nucleophile. Cysteine 94 and cysteine 193 are joined by a disulfide. Position 119 (glycine 119) interacts with ATP. Positions 143 to 145 (KDQ) are interaction with tRNA. Cysteine 193 (cysteine persulfide intermediate) is an active-site residue. The tract at residues 298-299 (RY) is interaction with tRNA.

Belongs to the MnmA/TRMU family.

The protein localises to the cytoplasm. The catalysed reaction is S-sulfanyl-L-cysteinyl-[protein] + uridine(34) in tRNA + AH2 + ATP = 2-thiouridine(34) in tRNA + L-cysteinyl-[protein] + A + AMP + diphosphate + H(+). In terms of biological role, catalyzes the 2-thiolation of uridine at the wobble position (U34) of tRNA, leading to the formation of s(2)U34. The sequence is that of tRNA-specific 2-thiouridylase MnmA from Microcystis aeruginosa (strain NIES-843 / IAM M-2473).